Here is a 313-residue protein sequence, read N- to C-terminus: 3'-5' exoribonuclease YhaM (313 aa).

The HD domain maps to 163 to 279 (HVVSMLRLAK…LHQIDLMDAS (117 aa)).

This sequence belongs to the YhaM family.

Shows a 3'-5' exoribonuclease activity. The polypeptide is 3'-5' exoribonuclease YhaM (Listeria monocytogenes serotype 4b (strain CLIP80459)).